The chain runs to 474 residues: Dipeptidase A (474 aa).

Residue cysteine 6 is part of the active site.

The protein belongs to the peptidase C69 family. Homooctamer.

The catalysed reaction is an L-aminoacyl-L-amino acid + H2O = 2 an L-alpha-amino acid. Its activity is regulated as follows. Inhibited by Zn(2+), Cu(2+), Ca(2+) and Cd(2+). Its function is as follows. Hydrolyzes a wide range of dipeptides but unable to hydrolyze dipeptides containing proline. Highest activity against Met-Ala. In Lactobacillus helveticus (Lactobacillus suntoryeus), this protein is Dipeptidase A (pepDA).